The primary structure comprises 278 residues: Phosphatidylglycerol--prolipoprotein diacylglyceryl transferase (278 aa).

4 consecutive transmembrane segments (helical) span residues Trp19–Gly39, Phe49–Val69, Ile86–Ile106, and Met112–Ile132. Arg134 provides a ligand contact to a 1,2-diacyl-sn-glycero-3-phospho-(1'-sn-glycerol). 3 helical membrane-spanning segments follow: residues Gln174 to Leu194, Gly204 to Met224, and Ile235 to Tyr255.

This sequence belongs to the Lgt family.

The protein localises to the cell membrane. It carries out the reaction L-cysteinyl-[prolipoprotein] + a 1,2-diacyl-sn-glycero-3-phospho-(1'-sn-glycerol) = an S-1,2-diacyl-sn-glyceryl-L-cysteinyl-[prolipoprotein] + sn-glycerol 1-phosphate + H(+). The protein operates within protein modification; lipoprotein biosynthesis (diacylglyceryl transfer). Its function is as follows. Catalyzes the transfer of the diacylglyceryl group from phosphatidylglycerol to the sulfhydryl group of the N-terminal cysteine of a prolipoprotein, the first step in the formation of mature lipoproteins. In Lactobacillus johnsonii (strain CNCM I-12250 / La1 / NCC 533), this protein is Phosphatidylglycerol--prolipoprotein diacylglyceryl transferase.